Consider the following 572-residue polypeptide: Pentatricopeptide repeat-containing protein At1g26900, mitochondrial (572 aa).

A mitochondrion-targeting transit peptide spans 1-117 (MTLAITSRLR…RAFSVFNQLR (117 aa)). 12 PPR repeats span residues 89-123 (NLFM…GLTL), 124-158 (DRFS…GFMV), 159-189 (FTDL…MPQS), 191-225 (DAVT…EVVV), 226-260 (NVST…GLDL), 261-291 (DLHL…AIRK), 292-326 (DVVT…KMKP), 327-361 (NSST…RIAL), 362-392 (DAIL…MKDK), 393-427 (DVKS…NCKV), 430-460 (NEIT…MVEA), and 466-496 (KVEH…LPIT). The interval 501–572 (AWRALLAACR…EAGYSAIEIE (72 aa)) is type E motif.

This sequence belongs to the PPR family. PCMP-E subfamily.

Its subcellular location is the mitochondrion. The protein is Pentatricopeptide repeat-containing protein At1g26900, mitochondrial (PCMP-E54) of Arabidopsis thaliana (Mouse-ear cress).